We begin with the raw amino-acid sequence, 238 residues long: Sugar fermentation stimulation protein homolog (238 aa).

It belongs to the SfsA family.

This chain is Sugar fermentation stimulation protein homolog, found in Haemophilus influenzae (strain ATCC 51907 / DSM 11121 / KW20 / Rd).